A 171-amino-acid chain; its full sequence is NADH-quinone oxidoreductase subunit I (171 aa).

4Fe-4S ferredoxin-type domains are found at residues 41–71 (LTRD…LQKT) and 81–110 (EFFR…LTPD). [4Fe-4S] cluster-binding residues include Cys-51, Cys-54, Cys-57, Cys-61, Cys-90, Cys-93, Cys-96, and Cys-100.

It belongs to the complex I 23 kDa subunit family. NDH-1 is composed of 14 different subunits. Subunits NuoA, H, J, K, L, M, N constitute the membrane sector of the complex. It depends on [4Fe-4S] cluster as a cofactor.

It localises to the cell inner membrane. The catalysed reaction is a quinone + NADH + 5 H(+)(in) = a quinol + NAD(+) + 4 H(+)(out). Functionally, NDH-1 shuttles electrons from NADH, via FMN and iron-sulfur (Fe-S) centers, to quinones in the respiratory chain. The immediate electron acceptor for the enzyme in this species is believed to be ubiquinone. Couples the redox reaction to proton translocation (for every two electrons transferred, four hydrogen ions are translocated across the cytoplasmic membrane), and thus conserves the redox energy in a proton gradient. This chain is NADH-quinone oxidoreductase subunit I, found in Methylococcus capsulatus (strain ATCC 33009 / NCIMB 11132 / Bath).